The primary structure comprises 626 residues: Elongation factor 4 (626 aa).

The tr-type G domain maps to 14–195 (SVIRNFCIIA…QIVMDVPAPH (182 aa)). Residues 26–31 (DHGKST) and 142–145 (NKID) contribute to the GTP site. The tract at residues 603–626 (LSTGEDSNDRDTKDKIRAAQKTEG) is disordered. The span at 609-626 (SNDRDTKDKIRAAQKTEG) shows a compositional bias: basic and acidic residues.

This sequence belongs to the TRAFAC class translation factor GTPase superfamily. Classic translation factor GTPase family. LepA subfamily.

Its subcellular location is the cell membrane. The catalysed reaction is GTP + H2O = GDP + phosphate + H(+). In terms of biological role, required for accurate and efficient protein synthesis under certain stress conditions. May act as a fidelity factor of the translation reaction, by catalyzing a one-codon backward translocation of tRNAs on improperly translocated ribosomes. Back-translocation proceeds from a post-translocation (POST) complex to a pre-translocation (PRE) complex, thus giving elongation factor G a second chance to translocate the tRNAs correctly. Binds to ribosomes in a GTP-dependent manner. This chain is Elongation factor 4, found in Bifidobacterium longum (strain DJO10A).